Consider the following 275-residue polypeptide: MSNLQAIIEAAFEKRAEITPKTVDAETHAAIEEVIEGLDSGKYRVAEKIAGEWVTHQWLKKAVLLSFRINDNQIIDGAETKYYDKVALKFADYTEERFTEEGFRVVPSATVRKGAYISKNCVLMPSYVNIGAYVGEGTMVDTWATVGSCAQIGKNVHLSGGVGIGGVLEPLQANPTIIGDNCFIGARSEVVEGVIVEDGCVISMGVFIGQSTKIYDRETGEIHYGRVPAGSVVVSGSLPSKCGKYSLYCAVIVKKVDAKTLGKVGINELLRSIEE.

Positions 104 and 141 each coordinate substrate.

It belongs to the transferase hexapeptide repeat family. In terms of assembly, homotrimer.

It is found in the cytoplasm. The catalysed reaction is (S)-2,3,4,5-tetrahydrodipicolinate + succinyl-CoA + H2O = (S)-2-succinylamino-6-oxoheptanedioate + CoA. It functions in the pathway amino-acid biosynthesis; L-lysine biosynthesis via DAP pathway; LL-2,6-diaminopimelate from (S)-tetrahydrodipicolinate (succinylase route): step 1/3. The chain is 2,3,4,5-tetrahydropyridine-2,6-dicarboxylate N-succinyltransferase from Haemophilus influenzae (strain 86-028NP).